We begin with the raw amino-acid sequence, 311 residues long: 33 kDa chaperonin (311 aa).

2 disulfide bridges follow: cysteine 240/cysteine 242 and cysteine 273/cysteine 276.

Belongs to the HSP33 family. Post-translationally, under oxidizing conditions two disulfide bonds are formed involving the reactive cysteines. Under reducing conditions zinc is bound to the reactive cysteines and the protein is inactive.

Its subcellular location is the cytoplasm. Its function is as follows. Redox regulated molecular chaperone. Protects both thermally unfolding and oxidatively damaged proteins from irreversible aggregation. Plays an important role in the bacterial defense system toward oxidative stress. The sequence is that of 33 kDa chaperonin from Trichodesmium erythraeum (strain IMS101).